We begin with the raw amino-acid sequence, 181 residues long: MTISDQNLIWVDLEMTGLDPEIHQIIEIATIVTDAQLNILAEGPVLAIHQSEAELAKMDDWCTNTHTNSGLVERIRQSKFTEEDAIRQTIAFLEQWVPKGASPICGNSIGQDRRFLYKHMPELEQYFHYRYLDVSTIKELTRRWQPELLEGFSKKGSHLALDDIHDSIAELRYYREHIFTI.

The Exonuclease domain occupies Leu8–Leu171. Tyr129 is an active-site residue.

It belongs to the oligoribonuclease family.

It is found in the cytoplasm. In terms of biological role, 3'-to-5' exoribonuclease specific for small oligoribonucleotides. The polypeptide is Oligoribonuclease (Photobacterium profundum (strain SS9)).